The primary structure comprises 143 residues: Insulin-like growth factor 1 (143 aa).

Positions 1–32 are cleaved as a signal peptide; that stretch reads MITPTVKMRILSSSHLFYLALCLLTFTSSATA. Residues 33-61 form a b region; it reads GPETLCGAELVDALQFVCGDRGFYFNKPT. 3 disulfide bridges follow: C38–C80, C50–C93, and C79–C84. The interval 62 to 73 is c; sequence GYGSSSRRAPQT. The a stretch occupies residues 74–94; sequence GIVDECCFRSCDLRRLEMYCA. Residues 95–102 form a d region; that stretch reads PLKPAKAA. The interval 99–143 is disordered; that stretch reads AKAARSVRAQRHTDMPKTQKYQPPSTNKKMKSQRRRKGSTFEEHK. Positions 103–143 are cleaved as a propeptide — e peptide; it reads RSVRAQRHTDMPKTQKYQPPSTNKKMKSQRRRKGSTFEEHK. Residues 126–136 are compositionally biased toward basic residues; the sequence is KKMKSQRRRKG.

This sequence belongs to the insulin family. Forms a ternary complex with IGFR1 and ITGAV:ITGB3. Forms a ternary complex with IGFR1 and ITGA6:ITGB4. Forms a ternary complex with IGFBP3 and ALS.

It localises to the secreted. Functionally, the insulin-like growth factors, isolated from plasma, are structurally and functionally related to insulin but have a much higher growth-promoting activity. May be a physiological regulator of [1-14C]-2-deoxy-D-glucose (2DG) transport and glycogen synthesis in osteoblasts. Stimulates glucose transport in bone-derived osteoblastic (PyMS) cells and is effective at much lower concentrations than insulin, not only regarding glycogen and DNA synthesis but also with regard to enhancing glucose uptake. May play a role in synapse maturation. Ca(2+)-dependent exocytosis of IGF1 is required for sensory perception of smell in the olfactory bulb. Acts as a ligand for IGF1R. Binds to the alpha subunit of IGF1R, leading to the activation of the intrinsic tyrosine kinase activity which autophosphorylates tyrosine residues in the beta subunit thus initiating a cascade of down-stream signaling events leading to activation of the PI3K-AKT/PKB and the Ras-MAPK pathways. Binds to integrins ITGAV:ITGB3 and ITGA6:ITGB4. Its binding to integrins and subsequent ternary complex formation with integrins and IGFR1 are essential for IGF1 signaling. Induces the phosphorylation and activation of IGFR1, MAPK3/ERK1, MAPK1/ERK2 and AKT1. As part of the MAPK/ERK signaling pathway, acts as a negative regulator of apoptosis in cardiomyocytes via promotion of STUB1/CHIP-mediated ubiquitination and degradation of ICER-type isoforms of CREM. The polypeptide is Insulin-like growth factor 1 (Oryctolagus cuniculus (Rabbit)).